The chain runs to 96 residues: Putative toxin Y4kP (96 aa).

This sequence belongs to the RelE toxin family.

Functionally, toxic component of a type II toxin-antitoxin (TA) system. This Sinorhizobium fredii (strain NBRC 101917 / NGR234) protein is Putative toxin Y4kP.